Consider the following 259-residue polypeptide: Secretion system apparatus protein SsaT (259 aa).

Helical transmembrane passes span 9–29 (LIAL…LPLL), 35–55 (GAAL…LPII), 78–98 (VIIG…VDMA), 127–147 (LLFS…EFIL), 185–205 (ISFS…LGLL), and 214–234 (VFFF…LISF).

Belongs to the FliR/MopE/SpaR family.

It localises to the cell membrane. Part of a type III secretion system. In Salmonella typhimurium (strain LT2 / SGSC1412 / ATCC 700720), this protein is Secretion system apparatus protein SsaT (ssaT).